Reading from the N-terminus, the 594-residue chain is Protein FAM200C (594 aa).

The protein is Protein FAM200C of Homo sapiens (Human).